Reading from the N-terminus, the 252-residue chain is Type III pantothenate kinase (252 aa).

An ATP-binding site is contributed by 6–13 (DIGNTSTA). 104–107 (GADR) provides a ligand contact to substrate. Asp-106 acts as the Proton acceptor in catalysis. Asp-128 is a K(+) binding site. An ATP-binding site is contributed by Thr-131. Residue Thr-183 participates in substrate binding.

It belongs to the type III pantothenate kinase family. As to quaternary structure, homodimer. It depends on NH4(+) as a cofactor. Requires K(+) as cofactor.

Its subcellular location is the cytoplasm. The catalysed reaction is (R)-pantothenate + ATP = (R)-4'-phosphopantothenate + ADP + H(+). The protein operates within cofactor biosynthesis; coenzyme A biosynthesis; CoA from (R)-pantothenate: step 1/5. Functionally, catalyzes the phosphorylation of pantothenate (Pan), the first step in CoA biosynthesis. This Thermus thermophilus (strain ATCC 27634 / DSM 579 / HB8) protein is Type III pantothenate kinase.